Consider the following 253-residue polypeptide: MRILLSNDDGVHAPGIQTLAKALREFADVQVVAPDRNRSGASNSLTLESSLRTFTFENGDIAVQMGTPTDCVYLGVNALMRPRPDIVVSGINAGPNLGDDVIYSGTVAAAMEGRHLGFPALAVSLDGHKHYDTAAAVTCSILRALCKEPLRTGRILNINVPDLPLDQIKGIRVTRCGTRHPADQVIPQQDPRGNTLYWIGPPGGKCDAGPGTDFAAVDDGYVSITPLHVDLTAHSAQDVVSDWLNSVGVGTQW.

A divalent metal cation is bound by residues Asp-8, Asp-9, Ser-39, and Asn-92.

Belongs to the SurE nucleotidase family. A divalent metal cation is required as a cofactor.

The protein resides in the cytoplasm. The catalysed reaction is a ribonucleoside 5'-phosphate + H2O = a ribonucleoside + phosphate. It carries out the reaction a ribonucleoside 3'-phosphate + H2O = a ribonucleoside + phosphate. The enzyme catalyses [phosphate](n) + H2O = [phosphate](n-1) + phosphate + H(+). In terms of biological role, nucleotidase with a broad substrate specificity as it can dephosphorylate various ribo- and deoxyribonucleoside 5'-monophosphates and ribonucleoside 3'-monophosphates with highest affinity to 3'-AMP. Also hydrolyzes polyphosphate (exopolyphosphatase activity) with the preference for short-chain-length substrates (P20-25). Might be involved in the regulation of dNTP and NTP pools, and in the turnover of 3'-mononucleotides produced by numerous intracellular RNases (T1, T2, and F) during the degradation of various RNAs. In Escherichia coli O127:H6 (strain E2348/69 / EPEC), this protein is 5'/3'-nucleotidase SurE.